The following is a 299-amino-acid chain: Tetrahydromethanopterin S-methyltransferase subunit E (299 aa).

6 helical membrane-spanning segments follow: residues 57–77 (AISG…TIAW), 80–100 (INAG…AAIV), 133–153 (IGPI…AAYL), 158–178 (LGNP…VGAI), 226–246 (YFCS…IIFL), and 262–282 (VTKT…AAVI).

Belongs to the MtrE family. In terms of assembly, the complex is composed of 8 subunits; MtrA, MtrB, MtrC, MtrD, MtrE, MtrF, MtrG and MtrH.

The protein localises to the cell membrane. It catalyses the reaction 5-methyl-5,6,7,8-tetrahydromethanopterin + coenzyme M + 2 Na(+)(in) = 5,6,7,8-tetrahydromethanopterin + methyl-coenzyme M + 2 Na(+)(out). Its pathway is one-carbon metabolism; methanogenesis from CO(2); methyl-coenzyme M from 5,10-methylene-5,6,7,8-tetrahydromethanopterin: step 2/2. Its function is as follows. Part of a complex that catalyzes the formation of methyl-coenzyme M and tetrahydromethanopterin from coenzyme M and methyl-tetrahydromethanopterin. This is an energy-conserving, sodium-ion translocating step. The chain is Tetrahydromethanopterin S-methyltransferase subunit E from Methanococcus maripaludis (strain C7 / ATCC BAA-1331).